Here is a 577-residue protein sequence, read N- to C-terminus: E3 ubiquitin-protein ligase MSL2 (577 aa).

The sufficient for interaction with MSL1 stretch occupies residues 1-116 (MNPVNATALY…CEYITQTTLA (116 aa)). Residues Cys-44, Cys-47, Cys-62, His-64, Cys-67, Cys-70, Cys-81, and Cys-84 each coordinate Zn(2+). The RING-type zinc finger occupies 44–85 (CCVCGHLLQDPIAPTNSTCQHYVCKTCKGKKMMMKPSCSWCK). Residue Lys-375 forms a Glycyl lysine isopeptide (Lys-Gly) (interchain with G-Cter in SUMO2) linkage. The disordered stretch occupies residues 405 to 428 (TKSMKKSHEHGSKKSHSKSKPGIL). The span at 407–423 (SMKKSHEHGSKKSHSKS) shows a compositional bias: basic residues. Phosphoserine is present on Ser-447. One can recognise a CXC MSL2-type domain in the interval 457–508 (QEKKGCKCGRATQNPSVLTCRGQRCPCYSNRKACLDCICRGCQNSYMANGEK). Cys-462, Cys-464, Cys-476, Cys-481, Cys-483, Cys-490, Cys-493, Cys-495, and Cys-498 together coordinate Zn(2+).

The protein belongs to the MSL2 family. Component of a multisubunit histone acetyltransferase complex (MSL) at least composed of the KAT8/MOF/MYST1, MSL1/hampin, MSL2 and MSL3. Forms a MSL heterotetrameric core with MSL1.

The protein localises to the nucleus. It localises to the chromosome. It carries out the reaction S-ubiquitinyl-[E2 ubiquitin-conjugating enzyme]-L-cysteine + [acceptor protein]-L-lysine = [E2 ubiquitin-conjugating enzyme]-L-cysteine + N(6)-ubiquitinyl-[acceptor protein]-L-lysine.. It participates in protein modification; protein ubiquitination. Its function is as follows. Non-catalytic component of the MSL histone acetyltransferase complex, a multiprotein complex that mediates the majority of histone H4 acetylation at 'Lys-16' (H4K16ac), an epigenetic mark that prevents chromatin compaction. The MSL complex is required for chromosome stability and genome integrity by maintaining homeostatic levels of H4K16ac. The MSL complex is also involved in gene dosage by promoting up-regulation of genes expressed by the X chromosome. X up-regulation is required to compensate for autosomal biallelic expression. The MSL complex also participates in gene dosage compensation by promoting expression of Tsix non-coding RNA. MSL2 plays a key role in gene dosage by ensuring biallelic expression of a subset of dosage-sensitive genes, including many haploinsufficient genes. Acts by promoting promoter-enhancer contacts, thereby preventing DNA methylation of one allele and creating a methylation-free environment for methylation-sensitive transcription factors such as SP1, KANSL1 and KANSL3. Also acts as an E3 ubiquitin ligase that promotes monoubiquitination of histone H2B at 'Lys-35' (H2BK34Ub), but not that of H2A. This activity is greatly enhanced by heterodimerization with MSL1. H2B ubiquitination in turn stimulates histone H3 methylation at 'Lys-4' (H3K4me) and 'Lys-79' (H3K79me) and leads to gene activation, including that of HOXA9 and MEIS1. This chain is E3 ubiquitin-protein ligase MSL2, found in Mus musculus (Mouse).